Reading from the N-terminus, the 302-residue chain is MSKNFDELLSRLKEVPTKKVAVAVAQDEPVLEAIKEATENNIAQAILVGDKQQIHEIAKKINLDLSDYEIMDIKDPKKATLEAVKLVSSGHADMLMKGLVDTATFLRSVLNKEVGLRTGKLMSHVAVFDVEGWDRLLFLTDAAFNTYPEFKDKVGMINNAVVVAHACGIDVPRVAPICPVEVVNTSMQSTVDAALLAKMSDRGQIKGCVIDGPFALDNAISEEAAHHKGVTGSVAGKADILLLPNIEAANVMYKTLTYFSKSRNGGLLVGTSAPVILTSRADSFETKVNSIALAALVAARNK.

This sequence belongs to the phosphate acetyltransferase and butyryltransferase family.

The enzyme catalyses butanoyl-CoA + phosphate = butanoyl phosphate + CoA. It functions in the pathway lipid metabolism; butanoate metabolism. Functionally, catalyzes the conversion of butyryl-CoA through butyryl phosphate to butyrate. The chain is Phosphate butyryltransferase (ptb) from Clostridium beijerinckii (strain ATCC 51743 / NCIMB 8052) (Clostridium acetobutylicum).